The following is a 24-amino-acid chain: Pseudin-2 (24 aa).

In terms of tissue distribution, expressed by the skin glands.

It localises to the secreted. Functionally, antimicrobial peptide with activity against fungus (C.albicans) and Gram-positive and Gram-negative bacteria (S.aureus and E.coli). Also has low hemolytic activity against human erythrocytes. The sequence is that of Pseudin-2 from Pseudis paradoxa (Paradoxical frog).